The primary structure comprises 228 residues: L-ribulose-5-phosphate 4-epimerase UlaF (228 aa).

Substrate contacts are provided by residues 26 to 27, 43 to 44, and 72 to 73; these read GN, SG, and SS. Residues D74, H93, and H95 each coordinate Zn(2+). The active-site Proton donor/acceptor is the D118. Residue H167 coordinates Zn(2+). The active-site Proton donor/acceptor is the Y225.

The protein belongs to the aldolase class II family. AraD/FucA subfamily. It depends on Zn(2+) as a cofactor.

The catalysed reaction is L-ribulose 5-phosphate = D-xylulose 5-phosphate. It functions in the pathway cofactor degradation; L-ascorbate degradation; D-xylulose 5-phosphate from L-ascorbate: step 4/4. Functionally, catalyzes the isomerization of L-ribulose 5-phosphate to D-xylulose 5-phosphate. Is involved in the anaerobic L-ascorbate utilization. In Escherichia coli (strain ATCC 8739 / DSM 1576 / NBRC 3972 / NCIMB 8545 / WDCM 00012 / Crooks), this protein is L-ribulose-5-phosphate 4-epimerase UlaF.